The sequence spans 512 residues: Metal transporter Nramp4 (512 aa).

A run of 12 helical transmembrane segments spans residues 52-72 (LWLF…PGNL), 80-100 (AIAG…GLLI), 129-149 (MVLW…EVIG), 161-181 (LVPL…FLFL), 189-209 (LEAV…WMFG), 235-255 (AVGI…SALV), 277-297 (IEST…TTVF), 323-343 (YGGG…AAGQ), 371-391 (ALIT…VFDS), 402-422 (WLNV…LCLV), 440-460 (ISWI…VDFF), and 468-488 (ILLV…LYLI).

This sequence belongs to the NRAMP (TC 2.A.55) family. In terms of tissue distribution, expressed in vascular tissues.

The protein resides in the vacuole membrane. Functionally, vacuolar metal transporter involved in intracellular metal homeostasis. Can transport iron (Fe), manganese (Mn) and cadmium (Cd). Regulates metal accumulation under Fe starvation. Acts redundantly with NRAMP3 to mobilize vacuolar Fe and provide sufficient Fe during seed germination. In association with NRAMP3, required for optimal growth and photosynthesis under Mn deficiency. Exports Mn from vacuoles in leaf mesophyll cells, making Mn available for functional photosystem II in chloroplasts. This chain is Metal transporter Nramp4 (NRAMP4), found in Arabidopsis thaliana (Mouse-ear cress).